We begin with the raw amino-acid sequence, 3094 residues long: Replicase polyprotein 1ab (3094 aa).

Catalysis depends on for leader protease activity residues Cys509 and His569. A coiled-coil region spans residues 622–647 (ARSVEKDLIDFKDEIKSLSKEKRSVT). One can recognise an Alphavirus-like MT domain in the interval 670–857 (SFTHSVYSDH…HKLSNIKSIM (188 aa)). Over residues 1807-1816 (DSESVSSDEV) the composition is skewed to low complexity. Residues 1807–1828 (DSESVSSDEVASNPRPGLHGGS) are disordered. The region spanning 2215-2387 (TQTNFVSANA…FVDDESRVYG (173 aa)) is the (+)RNA virus helicase ATP-binding domain. The (+)RNA virus helicase C-terminal domain occupies 2388 to 2548 (EVSYRCPWDV…AYRVYPTSFG (161 aa)). The RdRp catalytic domain maps to 2817–2930 (YNVGEIDFSK…FSESPIRNSA (114 aa)).

In terms of processing, the leader protease is released by autoproteolysis.

The protein resides in the host cytoplasmic vesicle membrane. The enzyme catalyses RNA(n) + a ribonucleoside 5'-triphosphate = RNA(n+1) + diphosphate. It carries out the reaction ATP + H2O = ADP + phosphate + H(+). In terms of biological role, L-pro is involved in systemic transport and in RNA amplification. Its function is as follows. RNA-dependent RNA polymerase replicates the viral genome. This Beet yellows virus (isolate Ukraine) (BYV) protein is Replicase polyprotein 1ab.